The primary structure comprises 94 residues: MLQSNEYFSGKVKSIGFTSSSTGRASVGVMAEGEYTFGTAEPEEMTVVSGALKVLLPGTVEWKVYAAGEVFNVPGHSEFHLQVAEPTSYLCRYL.

Belongs to the nucleoside phosphorylase PpnP family.

It carries out the reaction a purine D-ribonucleoside + phosphate = a purine nucleobase + alpha-D-ribose 1-phosphate. It catalyses the reaction adenosine + phosphate = alpha-D-ribose 1-phosphate + adenine. The enzyme catalyses cytidine + phosphate = cytosine + alpha-D-ribose 1-phosphate. The catalysed reaction is guanosine + phosphate = alpha-D-ribose 1-phosphate + guanine. It carries out the reaction inosine + phosphate = alpha-D-ribose 1-phosphate + hypoxanthine. It catalyses the reaction thymidine + phosphate = 2-deoxy-alpha-D-ribose 1-phosphate + thymine. The enzyme catalyses uridine + phosphate = alpha-D-ribose 1-phosphate + uracil. The catalysed reaction is xanthosine + phosphate = alpha-D-ribose 1-phosphate + xanthine. Its function is as follows. Catalyzes the phosphorolysis of diverse nucleosides, yielding D-ribose 1-phosphate and the respective free bases. Can use uridine, adenosine, guanosine, cytidine, thymidine, inosine and xanthosine as substrates. Also catalyzes the reverse reactions. The sequence is that of Pyrimidine/purine nucleoside phosphorylase from Salmonella heidelberg (strain SL476).